Consider the following 290-residue polypeptide: MSWLDKLLPPKIKQTDPKSRKGIPEGLWIKCPSCEAVLYRNDVEANLHVCPKCDHHMRIGARERLDGLLDPEGRYEIGQEILPVDALKFKDSRKYPDRLKEAMDETDETDAMVVMGGAIHTLPVVVACFEFAFMGGSMGSVVGERFARGAQNALEQNVPFICFTASGGARMQESLLSLMQMAKTTAMLTKLSEAKLPFISVLTDPTMGGVSASFAFLGDVVIAEPKALIGFAGPRVIEQTVREKLPEGFQRAEFLLQKGAIDMIVDRRKLREELAQLMALLTRQPADAVA.

In terms of domain architecture, CoA carboxyltransferase N-terminal spans 27–290 (LWIKCPSCEA…LTRQPADAVA (264 aa)). Zn(2+) contacts are provided by Cys31, Cys34, Cys50, and Cys53. A C4-type zinc finger spans residues 31-53 (CPSCEAVLYRNDVEANLHVCPKC).

Belongs to the AccD/PCCB family. Acetyl-CoA carboxylase is a heterohexamer composed of biotin carboxyl carrier protein (AccB), biotin carboxylase (AccC) and two subunits each of ACCase subunit alpha (AccA) and ACCase subunit beta (AccD). Zn(2+) serves as cofactor.

The protein localises to the cytoplasm. The catalysed reaction is N(6)-carboxybiotinyl-L-lysyl-[protein] + acetyl-CoA = N(6)-biotinyl-L-lysyl-[protein] + malonyl-CoA. Its pathway is lipid metabolism; malonyl-CoA biosynthesis; malonyl-CoA from acetyl-CoA: step 1/1. Functionally, component of the acetyl coenzyme A carboxylase (ACC) complex. Biotin carboxylase (BC) catalyzes the carboxylation of biotin on its carrier protein (BCCP) and then the CO(2) group is transferred by the transcarboxylase to acetyl-CoA to form malonyl-CoA. In Paraburkholderia phymatum (strain DSM 17167 / CIP 108236 / LMG 21445 / STM815) (Burkholderia phymatum), this protein is Acetyl-coenzyme A carboxylase carboxyl transferase subunit beta.